A 548-amino-acid polypeptide reads, in one-letter code: Serine/threonine-protein phosphatase 2A 56 kDa regulatory subunit delta 1 isoform (548 aa).

Basic residues predominate over residues 1–10 (MKGIKSKMLS). The segment at 1 to 75 (MKGIKSKMLS…KKVPIDTTPT (75 aa)) is disordered. Residues 27–39 (KKSNSHDSSKAPK) are compositionally biased toward basic and acidic residues. Position 96 is a phosphotyrosine (Tyr96). Residues Ser99, Ser109, and Ser542 each carry the phosphoserine modification.

Belongs to the phosphatase 2A regulatory subunit B family. PP2A consists of a common heterodimeric core enzyme, composed of a 36 kDa catalytic subunit (subunit C) and a 65 kDa constant regulatory subunit (PR65 or subunit A), that associates with a variety of regulatory subunits. Proteins that associate with the core dimer include three families of regulatory subunits B (the R2/B/PR55/B55, R3/B''/PR72/PR130/PR59 and R5/B'/B56 families), the 48 kDa variable regulatory subunit, viral proteins, and cell signaling molecules.

It is found in the cytoplasm. The protein resides in the nucleus. In terms of biological role, the B regulatory subunit might modulate substrate selectivity and catalytic activity, and might also direct the localization of the catalytic enzyme to a particular subcellular compartment. Has a role in cell shape control and septum formation. This is Serine/threonine-protein phosphatase 2A 56 kDa regulatory subunit delta 1 isoform (par1) from Schizosaccharomyces pombe (strain 972 / ATCC 24843) (Fission yeast).